Reading from the N-terminus, the 494-residue chain is Flagellin A (494 aa).

It belongs to the bacterial flagellin family. In terms of assembly, heteromer of FlaA and FlaB. FlaB is located proximal to the hook while the remainder of the filament is composed of the predominant FlaA.

It localises to the secreted. It is found in the bacterial flagellum. Flagellin is the subunit protein which polymerizes to form the filaments of bacterial flagella. Important for motility and virulence. This is Flagellin A (flaA) from Helicobacter mustelae.